The primary structure comprises 471 residues: 5-hydroxytryptamine receptor 2A (471 aa).

The Extracellular portion of the chain corresponds to 1–80 (MDILCEENTS…LQEKNWSALL (80 aa)). A glycan (N-linked (GlcNAc...) asparagine) is linked at N38. A helical membrane pass occupies residues 81 to 97 (TAVVIILTIAGNILVIM). Topologically, residues 98-111 (AVSLEKKLQNATNY) are cytoplasmic. Residues 112–137 (FLMSLAIADMLLGFLVMPVSMLTILY) traverse the membrane as a helical segment. Over 138-146 (GYRWPLPSK) the chain is Extracellular. A helical membrane pass occupies residues 147–171 (LCAVWIYLDVLFSTASIMHLCAISL). Residues C148 and C227 are joined by a disulfide bond. Residue D155 participates in serotonin binding. Positions 172–174 (DRY) match the DRY motif; important for ligand-induced conformation changes motif. The Cytoplasmic segment spans residues 172-191 (DRYVAIQNPIHHSRFNSRTK). Residues 192–215 (AFLKIIAVWTISVGISMPIPVFGL) traverse the membrane as a helical segment. Residues 216–232 (QDDSKVFKEGSCLLADD) lie on the Extracellular side of the membrane. A helical membrane pass occupies residues 233–258 (NFVLIGSFVSFFIPLTIMVITYFLTI). Residues 259-322 (KSLQKEATLC…QSISNEQKAC (64 aa)) are Cytoplasmic-facing. S280 carries the post-translational modification Phosphoserine. A helical transmembrane segment spans residues 323 to 348 (KVLGIVFSLFVVMWCPFFITNIMAVI). N343 lines the serotonin pocket. C349 and C353 are disulfide-bonded. Residues 349-356 (CKESCNED) are Extracellular-facing. Residues 357–382 (VIGALLNVFVWIGYLSSAVNPLVYTL) form a helical membrane-spanning segment. Positions 376–380 (NPLVY) match the NPxxY motif; important for ligand-induced conformation changes and signaling motif. Over 383–471 (FNKTYRSAFS…DGVNEKVSCV (89 aa)) the chain is Cytoplasmic. A disordered region spans residues 450–471 (KQHSEDASKDNSDGVNEKVSCV). Over residues 451–465 (QHSEDASKDNSDGVN) the composition is skewed to basic and acidic residues. The PDZ-binding motif lies at 469–471 (SCV).

The protein belongs to the G-protein coupled receptor 1 family. As to quaternary structure, interacts (via C-terminus) with MPDZ and PATJ. May interact (via C-terminus) with MPP3, PRDX6, DLG4, DLG1, CASK, APBA1 and MAGI2. Interacts with GRM2 and DRD2; this may affect signaling.

The protein resides in the cell membrane. Its subcellular location is the cell projection. The protein localises to the dendrite. It localises to the axon. It is found in the cytoplasmic vesicle. The protein resides in the membrane. Its subcellular location is the caveola. The protein localises to the presynapse. Its activity is regulated as follows. G-protein coupled receptor activity is regulated by lipids: oleamide increases HTR2A-mediated activity. G-protein coupled receptor for 5-hydroxytryptamine (serotonin). Also functions as a receptor for various drugs and psychoactive substances, including mescaline, psilocybin, 1-(2,5-dimethoxy-4-iodophenyl)-2-aminopropane (DOI) and lysergic acid diethylamide (LSD). Ligand binding causes a conformation change that triggers signaling via guanine nucleotide-binding proteins (G proteins) and modulates the activity of downstream effectors. HTR2A is coupled to G(q)/G(11) G alpha proteins and activates phospholipase C-beta, releasing diacylglycerol (DAG) and inositol 1,4,5-trisphosphate (IP3) second messengers that modulate the activity of phosphatidylinositol 3-kinase and promote the release of Ca(2+) ions from intracellular stores, respectively. Beta-arrestin family members inhibit signaling via G proteins and mediate activation of alternative signaling pathways. Affects neural activity, perception, cognition and mood. Plays a role in the regulation of behavior, including responses to anxiogenic situations and psychoactive substances. Plays a role in intestinal smooth muscle contraction, and may play a role in arterial vasoconstriction. This is 5-hydroxytryptamine receptor 2A (HTR2A) from Pongo pygmaeus (Bornean orangutan).